The primary structure comprises 179 residues: Large ribosomal subunit protein uL10 (179 aa).

The binds L7/L12 dimers stretch occupies residues 137–179; sequence KEELYAMLVGRVKAPITGLVFALSGILRNLVYVLNAIKEKKSE.

Part of the ribosomal stalk of the 50S ribosomal subunit. The N-terminus interacts with L11 and 23S rRNA to form the base of the stalk. The C-terminus forms an elongated spine to which 3 L12 dimers bind in a sequential fashion forming a heptameric L10(L12)2(L12)2(L12)2 complex.

Functionally, forms part of the ribosomal stalk, playing a central role in the interaction of the ribosome with GTP-bound translation factors (such as IF-2, EF-Tu, EF-G and RF3). The polypeptide is Large ribosomal subunit protein uL10 (rplJ) (Thermotoga maritima (strain ATCC 43589 / DSM 3109 / JCM 10099 / NBRC 100826 / MSB8)).